Here is a 705-residue protein sequence, read N- to C-terminus: Methionine--tRNA ligase (705 aa).

The 'HIGH' region signature appears at 17–27 (PYANGPVHLGH). Residues Cys-149, Cys-152, Cys-162, and Cys-165 each coordinate Zn(2+). A 'KMSKS' region motif is present at residues 347 to 351 (KFSKS). An ATP-binding site is contributed by Lys-350. The tRNA-binding domain maps to 604 to 705 (EFQKVDLRVA…GEGINGQSVQ (102 aa)).

The protein belongs to the class-I aminoacyl-tRNA synthetase family. MetG type 1 subfamily. Homodimer. Requires Zn(2+) as cofactor.

Its subcellular location is the cytoplasm. The enzyme catalyses tRNA(Met) + L-methionine + ATP = L-methionyl-tRNA(Met) + AMP + diphosphate. Is required not only for elongation of protein synthesis but also for the initiation of all mRNA translation through initiator tRNA(fMet) aminoacylation. This Chlorobium chlorochromatii (strain CaD3) protein is Methionine--tRNA ligase.